Consider the following 232-residue polypeptide: Ubiquinone biosynthesis O-methyltransferase (232 aa).

4 residues coordinate S-adenosyl-L-methionine: Arg-36, Gly-55, Asp-76, and Met-120.

It belongs to the methyltransferase superfamily. UbiG/COQ3 family.

The catalysed reaction is a 3-demethylubiquinol + S-adenosyl-L-methionine = a ubiquinol + S-adenosyl-L-homocysteine + H(+). It carries out the reaction a 3-(all-trans-polyprenyl)benzene-1,2-diol + S-adenosyl-L-methionine = a 2-methoxy-6-(all-trans-polyprenyl)phenol + S-adenosyl-L-homocysteine + H(+). Its pathway is cofactor biosynthesis; ubiquinone biosynthesis. Its function is as follows. O-methyltransferase that catalyzes the 2 O-methylation steps in the ubiquinone biosynthetic pathway. The chain is Ubiquinone biosynthesis O-methyltransferase from Burkholderia thailandensis (strain ATCC 700388 / DSM 13276 / CCUG 48851 / CIP 106301 / E264).